Consider the following 890-residue polypeptide: Alanine--tRNA ligase (890 aa).

Positions 565, 569, 677, and 681 each coordinate Zn(2+).

Belongs to the class-II aminoacyl-tRNA synthetase family. Zn(2+) serves as cofactor.

Its subcellular location is the cytoplasm. The catalysed reaction is tRNA(Ala) + L-alanine + ATP = L-alanyl-tRNA(Ala) + AMP + diphosphate. In terms of biological role, catalyzes the attachment of alanine to tRNA(Ala) in a two-step reaction: alanine is first activated by ATP to form Ala-AMP and then transferred to the acceptor end of tRNA(Ala). Also edits incorrectly charged Ser-tRNA(Ala) and Gly-tRNA(Ala) via its editing domain. The chain is Alanine--tRNA ligase from Zymomonas mobilis subsp. mobilis (strain ATCC 31821 / ZM4 / CP4).